The primary structure comprises 122 residues: Large ribosomal subunit protein uL14 (122 aa).

This sequence belongs to the universal ribosomal protein uL14 family. Part of the 50S ribosomal subunit. Forms a cluster with proteins L3 and L19. In the 70S ribosome, L14 and L19 interact and together make contacts with the 16S rRNA in bridges B5 and B8.

Its function is as follows. Binds to 23S rRNA. Forms part of two intersubunit bridges in the 70S ribosome. This Rhizobium etli (strain CIAT 652) protein is Large ribosomal subunit protein uL14.